The sequence spans 893 residues: MEKDDPPQLVTPTSVKAIILRIEAAQLTRAQEDISTQLSDILDNVNCVINRFQEELGYDLKENAKSQQRDPKGKKRFILLEKIASFSKDAMMKEKHLYDILRWLGDWGDTLTYEIGPRKSEEEAAALDEWIEVTEKVLPLSLIATKRGIESLTALCSTLIEGQKKRSQVSKRTFWQGWQGRSPQTSPSHPQPLSPEQMLQDQHTMNTKASEVTSMLQELLDSTMFSKGEVRAIRYMATVVENLNKALILQHKENRSLETKYRHLQMQATKELSSQRLHFQQFMEVLESRRDALLKQVEILGGRYHDLLLMKQALEFQLKKAQNATGQAEDLAEVSVDSPGPSERETLPRKETVMEESQQEPMKEEQLFSPLPPSPMAMIRDSGAIAAGHQPLSTMTVRSRVADVFGSKDTESLEPVLLPLVDRRFPKKWERPVAESLGHKDKDQEDYFQKGGLQIKFHCSKQLSLESSRQVTSESQEEPWEEEFGREMRRQLWLEEEEMWQQRQKKWALLEQEHQEKLRQWNLEDLAREQQRRWVQLEKEQESPRREPEQLGEDVERRIFTPTSRWRDLEKAELSLVPAPSRTQSAHQSRRPHLPMSPSTQQPALGKQRPMSSVEFTYRPRTRRVPTKPKKSASFPVTGTSIRRLTWPSLQISPANIKKKVYHMDMEAQRKNLQLLSEESELRLPHYLRSKALELTTTTMELGALRLQYLCHKYIFYRRLQSLRQEAINHVQIMKETEASYKAQNLYIFLENIDRLQSLRLQAWTDKQKGLEEKHRECLSSMVTMFPKLQLEWNVHLNIPEVTSPKPKKCKLPAASPRHIRPSGPTYKQPFLSRHRACVPLQMARQQGKQMEAVWKTEVASSSYAIEKKTPASLPRDQLRGHPDIPRLLTLDV.

5 disordered regions span residues 177–207 (GWQG…TMNT), 327–376 (QAED…PSPM), 537–557 (LEKE…DVER), 574–611 (LSLV…QRPM), and 806–827 (KPKK…GPTY). 2 stretches are compositionally biased toward polar residues: residues 179–188 (QGRSPQTSPS) and 197–207 (QMLQDQHTMNT). The stretch at 303 to 331 (RYHDLLLMKQALEFQLKKAQNATGQAEDL) forms a coiled coil. Residues 342-353 (SERETLPRKETV) are compositionally biased toward basic and acidic residues.

This sequence belongs to the FAM186 family.

This Homo sapiens (Human) protein is Protein FAM186B (FAM186B).